A 497-amino-acid chain; its full sequence is uncharacterized protein (497 aa).

Positions aspartate 474 to arginine 497 are disordered. A compositionally biased stretch (acidic residues) spans serine 488–arginine 497.

This is an uncharacterized protein from Bacillus anthracis.